A 196-amino-acid polypeptide reads, in one-letter code: Heat shock protein beta-8 (196 aa).

The tract at residues 1–28 (MADGQLPFPCSYPSRLRRDPFRDSPLSS) is disordered. Ser24 and Ser57 each carry phosphoserine. A Phosphothreonine modification is found at Thr63. Asymmetric dimethylarginine is present on residues Arg71 and Arg78. One can recognise a sHSP domain in the interval 78–185 (RFGVPAEGRS…PFGESSFNNE (108 aa)). The residue at position 87 (Ser87) is a Phosphoserine. The interval 176–196 (PFGESSFNNELPQDNQEVTCS) is disordered. The span at 178 to 196 (GESSFNNELPQDNQEVTCS) shows a compositional bias: polar residues.

Belongs to the small heat shock protein (HSP20) family. Monomer. Forms a ternary complex with BAG3 and HSPA1A. Component of the chaperone-assisted selective autophagy (CASA) complex consisting of BAG3, HSPA8/HSC70, HSPB8 and STUB1/CHIP. Interacts with HSPB1. Interacts with DNAJB6. Interacts with BAG3. As to expression, highly expressed in skeletal muscle, heart, uterus, liver, lung and ovary. Low levels found in stomach and brain. Not detected in small intestine, large intestine, kidney, spleen and testis. In the ovary, expression is concentrated in the endometrium and in the connective tissue between the circular and longitudinal muscles of the myometrium.

It localises to the cytoplasm. Its subcellular location is the nucleus. In terms of biological role, involved in the chaperone-assisted selective autophagy (CASA), a crucial process for protein quality control, particularly in mechanical strained cells and tissues such as muscle. Displays temperature-dependent chaperone activity. The chain is Heat shock protein beta-8 (Hspb8) from Mus musculus (Mouse).